The following is a 38-amino-acid chain: CHH precursor-related peptide (38 aa).

Residues glycine 18–glutamate 38 form a disordered region.

As to expression, produced by the medulla terminalis X-organ in the eyestalks and transported to the sinus gland where it is stored and released.

Its subcellular location is the secreted. The chain is CHH precursor-related peptide from Cancer pagurus (Rock crab).